The primary structure comprises 157 residues: Transcription antitermination protein NusB (157 aa).

The protein belongs to the NusB family.

Its function is as follows. Involved in transcription antitermination. Required for transcription of ribosomal RNA (rRNA) genes. Binds specifically to the boxA antiterminator sequence of the ribosomal RNA (rrn) operons. The polypeptide is Transcription antitermination protein NusB (Xylella fastidiosa (strain Temecula1 / ATCC 700964)).